The sequence spans 791 residues: Biofilm architecture maintenance protein MbaA (791 aa).

The signal sequence occupies residues 1-23; that stretch reads MKLNHRILLLIAPVILLSAAASS. The Periplasmic segment spans residues 24–259; that stretch reads YIIYTSQKNA…NAQLHSIQRE (236 aa). A helical transmembrane segment spans residues 260–280; it reads LLLSFGVSALVTVLMLLLLLY. The HAMP domain occupies 281-333; that stretch reads RHVINPILHLDKQLEEVENNQRKNIEKLNTDDEIGRLSSRFYAMYSELHSTYQ. Residues 281-791 are Cytoplasmic-facing; sequence RHVINPILHL…FTEPSQSECR (511 aa). The region spanning 368 to 509 is the GGDEF domain; the sequence is QHIWVMYIDL…GKNQVAYYSQ (142 aa). An EAL domain is found at 518–769; the sequence is RNNIERALRL…EISPWLHASN (252 aa).

The protein localises to the cell inner membrane. In terms of biological role, plays an essential role in the maintenance and the formation of the three-dimensional structure of the biofilms at the later stages of their development. Absence of mbaA promotes the accumulation of larger amount of biomass on the surfaces at later stage of development, results in the overproduction of an extracellular polymeric substance that accumulates in the matrix of biofilms. This yields biofilms lacking the typical structure consisting of pillars of cells separated by fluid filled channels. This chain is Biofilm architecture maintenance protein MbaA (mbaA), found in Vibrio cholerae serotype O1 (strain ATCC 39315 / El Tor Inaba N16961).